Here is a 178-residue protein sequence, read N- to C-terminus: Ribosome maturation factor RimP (178 aa).

It belongs to the RimP family.

It localises to the cytoplasm. Its function is as follows. Required for maturation of 30S ribosomal subunits. In Streptococcus pyogenes serotype M4 (strain MGAS10750), this protein is Ribosome maturation factor RimP.